We begin with the raw amino-acid sequence, 159 residues long: MCAKIALLLVLVGAASAAVLPDKFYGTFDLDHSENFDEYLTAKGYGWFTRKLVTFATFKKVFTKTSNKNLFDYSNLTSKKDVHYKNVQLGKAFQGEGLDSTKHEITFTLKDGHLFEHHKPLEGGDAKEETYEYLFDKEFLLVRMSFNGVEGRRFYKRLP.

An N-terminal signal peptide occupies residues 1–17 (MCAKIALLLVLVGAASA).

The protein belongs to the calycin superfamily. Fatty-acid binding protein (FABP) family. In terms of tissue distribution, first detected in hypodermal precursor cells at the time of gastrulation. From the two-fold stage through to three-fold stages, expression is localized exclusively to hyp-7 but disappears in newly hatched L1s and subsequent developmental stages. Expression from L1 to adult stages is found in a single neuron in the ventral cord with a process into the nerve ring.

It is found in the secreted. Its function is as follows. May play a role in sequestering potentially toxic fatty acids and their peroxidation products, or it may be involved in the maintenance of the impermeable lipid layer of the eggshell. The sequence is that of Fatty acid-binding protein homolog 1 (lbp-1) from Caenorhabditis elegans.